The primary structure comprises 657 residues: DNA mismatch repair protein MutL (657 aa).

This sequence belongs to the DNA mismatch repair MutL/HexB family.

In terms of biological role, this protein is involved in the repair of mismatches in DNA. It is required for dam-dependent methyl-directed DNA mismatch repair. May act as a 'molecular matchmaker', a protein that promotes the formation of a stable complex between two or more DNA-binding proteins in an ATP-dependent manner without itself being part of a final effector complex. In Streptococcus agalactiae serotype III (strain NEM316), this protein is DNA mismatch repair protein MutL.